The primary structure comprises 163 residues: Phosphopantetheine adenylyltransferase (163 aa).

A substrate-binding site is contributed by Thr-10. ATP-binding positions include 10–11 and His-18; that span reads TF. Residues Lys-42, Leu-74, and Arg-88 each coordinate substrate. Residues 89-91, Glu-99, and 124-130 contribute to the ATP site; these read GLR and NSFISST.

Belongs to the bacterial CoaD family. Homohexamer. Mg(2+) is required as a cofactor.

It is found in the cytoplasm. It catalyses the reaction (R)-4'-phosphopantetheine + ATP + H(+) = 3'-dephospho-CoA + diphosphate. The protein operates within cofactor biosynthesis; coenzyme A biosynthesis; CoA from (R)-pantothenate: step 4/5. Functionally, reversibly transfers an adenylyl group from ATP to 4'-phosphopantetheine, yielding dephospho-CoA (dPCoA) and pyrophosphate. This Shewanella sp. (strain W3-18-1) protein is Phosphopantetheine adenylyltransferase.